A 74-amino-acid polypeptide reads, in one-letter code: Amphipathic peptide CT1 (74 aa).

A signal peptide spans 1–23 (MKTQIVILFISMIMLQMFVQIEG). Residue V37 is modified to Valine amide. Residues 41-74 (GLRNLDDLDDLDLDHLFDSDVSDADLRLLKQMFR) constitute a propeptide that is removed on maturation.

It belongs to the non-disulfide-bridged peptide (NDBP) superfamily. Short antimicrobial peptide (group 4) family. In terms of tissue distribution, expressed by the venom gland.

It localises to the secreted. The protein localises to the target cell membrane. Antimicrobial peptide that is rapidly bactericidal against Gram-positive bacteria (MIC=12.5 ug/ml against S.aureus, and MIC=100 ug/ml against M.luteus). Is also active against clinical antibiotics-resistant bacterial strains. In Scorpiops tibetanus (Scorpion), this protein is Amphipathic peptide CT1.